Here is a 115-residue protein sequence, read N- to C-terminus: Photosystem II reaction center Psb28 protein (115 aa).

The protein belongs to the Psb28 family. In terms of assembly, part of the photosystem II complex.

It localises to the plastid. The protein resides in the chloroplast thylakoid membrane. The sequence is that of Photosystem II reaction center Psb28 protein from Pyropia yezoensis (Susabi-nori).